A 393-amino-acid polypeptide reads, in one-letter code: Bone morphogenetic protein 15 (393 aa).

Positions 1–25 (MVLLSILRILLWGLVLFMEHRVQMT) are cleaved as a signal peptide. Positions 26–268 (QVGQPSIAHL…DPSLLLRRAR (243 aa)) are excised as a propeptide. Residues asparagine 86 and asparagine 237 are each glycosylated (N-linked (GlcNAc...) asparagine). 3 disulfides stabilise this stretch: cysteine 292/cysteine 358, cysteine 321/cysteine 390, and cysteine 325/cysteine 392. Residue asparagine 374 is glycosylated (N-linked (GlcNAc...) asparagine).

It belongs to the TGF-beta family. In terms of assembly, homodimer. But, in contrast to other members of this family, cannot be disulfide-linked.

The protein localises to the secreted. Its function is as follows. May be involved in follicular development. Oocyte-specific growth/differentiation factor that stimulates folliculogenesis and granulosa cell (GC) growth. This chain is Bone morphogenetic protein 15 (BMP15), found in Ovis aries (Sheep).